We begin with the raw amino-acid sequence, 690 residues long: ATP-dependent DNA helicase Hel308 (690 aa).

ATP-binding positions include glutamine 26 and 45–52; that span reads IPTASGKT. One can recognise a Helicase ATP-binding domain in the interval 32-188; sequence AGYLESEDNY…WLDARVVEHD (157 aa). The DEAH box motif lies at 133-136; that stretch reads DEFH. The region spanning 208–417 is the Helicase C-terminal domain; that stretch reads EKNDVVLKVL…NRDALYRQII (210 aa).

It belongs to the helicase family. Hel308 subfamily. As to quaternary structure, monomer. Binds replication protein A (RPA), in presence and absence of DNA.

It catalyses the reaction Couples ATP hydrolysis with the unwinding of duplex DNA by translocating in the 3'-5' direction.. The catalysed reaction is ATP + H2O = ADP + phosphate + H(+). Functionally, DNA-dependent ATPase and 3'-5' DNA helicase that may be involved in repair of stalled replication forks. Helicase with 3'-to 5'- polarity; able to unwind over 100 bp of DNA at 50 degrees Celsius. Unwinds forked DNA, preferentially on lagging strand forks; has weaker activity on Holliday junctions. Displaces the invading strand in DNA D-loops. Unwinds short oligonucleotides from dsDNA with 3'- but not blunt ends or 5'-ssDNA tails in an ATP-dependent manner. ATPase activity is stimulated by ssDNA but not dsDNA, protein binds ssDNA, dsDNA with 5'- or 3'-overhangs but not blunt ended dsDNA and replication forks. Replication forks bind both this protein and RPA. RPA does not stimulate the helicase activity of this protein. This is ATP-dependent DNA helicase Hel308 from Methanothermobacter thermautotrophicus (strain ATCC 29096 / DSM 1053 / JCM 10044 / NBRC 100330 / Delta H) (Methanobacterium thermoautotrophicum).